The following is a 254-amino-acid chain: Low affinity immunoglobulin gamma Fc region receptor III-A (254 aa).

Residues 1-20 (MWQLLLPTALLLLVSAGMRA) form the signal peptide. Residues 21-206 (EDLPKAVVFL…SSISSFFPPG (186 aa)) are Extracellular-facing. Ig-like C2-type domains are found at residues 24 to 105 (PKAV…LEVH) and 107 to 189 (GWLL…VNIT). Cystine bridges form between Cys47–Cys89 and Cys128–Cys172. Asn187 carries an N-linked (GlcNAc...) asparagine glycan. A helical transmembrane segment spans residues 207-229 (YQVSFCLVMVLLFAVDTGLYFSV). Residues 230 to 254 (KKSVPSSTRDWEDHKFKWSKDPQDK) lie on the Cytoplasmic side of the membrane.

In terms of assembly, forms a heterooligomeric complex with ITAM-containing signaling subunits, either a homodimer of CD247, a homodimer of FCER1G or a heterodimer of CD247 and FCER1G, to form a functional receptor complex. Interacts (via transmembrane domain) with signaling subunits; this interaction is a prerequisite for receptor complex expression on the cell surface and intracellular signal transduction. Binds the Fc region of antigen-complexed IgG with a preference for IgG1 and IgG3 isotypes. Interacts with CD2; this interaction is involved in NK cell activation and cytotoxicity. Interacts with S100A4; this interaction inhibits PKC-dependent phosphorylation of FCGR3A. Post-translationally, glycosylated. Glycosylation plays an inhibitory role in the interaction with IgG1 and IgG2. In terms of processing, undergoes rapid ectodomain shedding upon NK cell stimulation. The soluble form is produced by a proteolytic cleavage mediated by ADAM17. Repeated stimulation causes receptor shedding, a mechanism that allows for increased NK cell motility and detachment from opsonized target cells while avoiding activation-induced NK cell apoptosis. In terms of tissue distribution, lymphocytes and monocytes.

The protein localises to the cell membrane. It is found in the secreted. Receptor for the invariable Fc fragment of immunoglobulin gamma (IgG). Optimally activated upon binding of clustered antigen-IgG complexes displayed on cell surfaces, triggers lysis of antibody-coated cells, a process known as antibody-dependent cellular cytotoxicity (ADCC). Does not bind free monomeric IgG, thus avoiding inappropriate effector cell activation in the absence of antigenic trigger. Mediates IgG effector functions on natural killer (NK) cells. Binds antigen-IgG complexes generated upon infection and triggers NK cell-dependent cytokine production and degranulation to limit viral load and propagation. Involved in the generation of memory-like adaptive NK cells capable to produce high amounts of IFNG and to efficiently eliminate virus-infected cells via ADCC. Regulates NK cell survival and proliferation, in particular by preventing NK cell progenitor apoptosis. Fc-binding subunit that associates with CD247 and/or FCER1G adapters to form functional signaling complexes. Following the engagement of antigen-IgG complexes, triggers phosphorylation of immunoreceptor tyrosine-based activation motif (ITAM)-containing adapters with subsequent activation of phosphatidylinositol 3-kinase signaling and sustained elevation of intracellular calcium that ultimately drive NK cell activation. The ITAM-dependent signaling coupled to receptor phosphorylation by PKC mediates robust intracellular calcium flux that leads to production of pro-inflammatory cytokines, whereas in the absence of receptor phosphorylation it mainly activates phosphatidylinositol 3-kinase signaling leading to cell degranulation. Costimulates NK cells and trigger lysis of target cells independently of IgG binding. Mediates the antitumor activities of therapeutic antibodies. Upon ligation on monocytes triggers TNFA-dependent ADCC of IgG-coated tumor cells. Mediates enhanced ADCC in response to afucosylated IgGs. The protein is Low affinity immunoglobulin gamma Fc region receptor III-A of Macaca mulatta (Rhesus macaque).